A 319-amino-acid chain; its full sequence is tRNA(Ile)-lysidine synthase (319 aa).

32–37 provides a ligand contact to ATP; the sequence is SGGSDS.

Belongs to the tRNA(Ile)-lysidine synthase family.

Its subcellular location is the cytoplasm. It carries out the reaction cytidine(34) in tRNA(Ile2) + L-lysine + ATP = lysidine(34) in tRNA(Ile2) + AMP + diphosphate + H(+). Ligates lysine onto the cytidine present at position 34 of the AUA codon-specific tRNA(Ile) that contains the anticodon CAU, in an ATP-dependent manner. Cytidine is converted to lysidine, thus changing the amino acid specificity of the tRNA from methionine to isoleucine. This Chlamydia pneumoniae (Chlamydophila pneumoniae) protein is tRNA(Ile)-lysidine synthase.